The primary structure comprises 307 residues: UPF0276 protein HI_1600 (307 aa).

It belongs to the UPF0276 family.

The sequence is that of UPF0276 protein HI_1600 from Haemophilus influenzae (strain ATCC 51907 / DSM 11121 / KW20 / Rd).